The chain runs to 510 residues: Anaerobic nitric oxide reductase transcription regulator NorR (510 aa).

The region spanning 188–417 (IIGNSQGMRT…LEHVIKRAAV (230 aa)) is the Sigma-54 factor interaction domain. ATP contacts are provided by residues 216–223 (GETGVGKE) and 279–288 (ADGGTLFLDE). A DNA-binding region (H-T-H motif) is located at residues 486 to 505 (WAATARQLELDSGNLHRLAK).

It participates in nitrogen metabolism; nitric oxide reduction. In terms of biological role, required for the expression of anaerobic nitric oxide (NO) reductase, acts as a transcriptional activator for at least the norVW operon. Activation also requires sigma-54. The chain is Anaerobic nitric oxide reductase transcription regulator NorR from Vibrio vulnificus (strain YJ016).